The chain runs to 378 residues: UPF0754 membrane protein BCE33L0760 (378 aa).

The next 2 membrane-spanning stretches (helical) occupy residues 1–21 (MNIW…GGFT) and 357–377 (YLGA…LLFL).

This sequence belongs to the UPF0754 family.

It localises to the cell membrane. The protein is UPF0754 membrane protein BCE33L0760 of Bacillus cereus (strain ZK / E33L).